The following is a 297-amino-acid chain: T-cell leukemia homeobox protein 1 (297 aa).

The tract at residues 153-174 (DRFTGHPYQNRTPPKKKKPRTS) is disordered. The homeobox DNA-binding region spans 168 to 227 (KKKPRTSFTRLQICELEKRFHRQKYLASAERAALAKALKMTDAQVKTWFQNRRTKWRRQT).

Its subcellular location is the nucleus. Its function is as follows. Seems to be involved in the development of cranial sensory innervation from peripheral ganglia. The chain is T-cell leukemia homeobox protein 1 (TLX1) from Gallus gallus (Chicken).